The sequence spans 383 residues: UDP-N-acetylglucosamine 2-epimerase (383 aa).

The protein belongs to the UDP-N-acetylglucosamine 2-epimerase family.

The catalysed reaction is UDP-N-acetyl-alpha-D-glucosamine = UDP-N-acetyl-alpha-D-mannosamine. It functions in the pathway capsule biogenesis; capsule polysaccharide biosynthesis. In terms of biological role, non-hydrolyzing C2-epimerase involved in the biosynthesis of capsular polysaccharides. Catalyzes the C2 epimerization of UDP-N-acetylglucosamine (UDP-GlcNAc) to form UDP-N-acetylmannosamine (UDP-ManNAc). The polypeptide is UDP-N-acetylglucosamine 2-epimerase (Campylobacter jejuni).